The following is a 304-amino-acid chain: MGAQLRVYRRRIRSTKSMAKITRAMELIAATRITKAQRAAEAAAPYAREITRAVSAVAARVSDHPLLTEAENPTRAAVLVITSDKGLAGAYTANAIKEAERLTALLNEQGKEVLTYMVGRKGIGFYKFRERPLADSWEGFTERPSYMHAMEISSALMEKFIQETAEGGVDEIHIVSTEFISMINQRARASRILPLEVEEVDSKVLEAEQGPLPLYEFEPGAEEVLDQLLPKYVTNRIYFALLESAASQHASRRAAMKAATDNAEELVKTLTRQANQARQAEITNEISEIVGGADALAAASAGSE.

This sequence belongs to the ATPase gamma chain family. F-type ATPases have 2 components, CF(1) - the catalytic core - and CF(0) - the membrane proton channel. CF(1) has five subunits: alpha(3), beta(3), gamma(1), delta(1), epsilon(1). CF(0) has three main subunits: a, b and c.

It is found in the cell membrane. Its function is as follows. Produces ATP from ADP in the presence of a proton gradient across the membrane. The gamma chain is believed to be important in regulating ATPase activity and the flow of protons through the CF(0) complex. The chain is ATP synthase gamma chain from Thermobifida fusca (strain YX).